The chain runs to 576 residues: Urease subunit alpha (576 aa).

The region spanning 132-576 (GGIDTHIHFI…LPMAQRYFLF (445 aa)) is the Urease domain. The Ni(2+) site is built by His-137, His-139, and Lys-220. The residue at position 220 (Lys-220) is an N6-carboxylysine. A substrate-binding site is contributed by His-222. His-249 and His-275 together coordinate Ni(2+). Residue His-323 is the Proton donor of the active site. Ni(2+) is bound at residue Asp-363.

Belongs to the metallo-dependent hydrolases superfamily. Urease alpha subunit family. In terms of assembly, heterotrimer of UreA (gamma), UreB (beta) and UreC (alpha) subunits. Three heterotrimers associate to form the active enzyme. It depends on Ni cation as a cofactor. In terms of processing, carboxylation allows a single lysine to coordinate two nickel ions.

The protein localises to the cytoplasm. It carries out the reaction urea + 2 H2O + H(+) = hydrogencarbonate + 2 NH4(+). Its pathway is nitrogen metabolism; urea degradation; CO(2) and NH(3) from urea (urease route): step 1/1. This is Urease subunit alpha from Paenarthrobacter aurescens (strain TC1).